Here is a 642-residue protein sequence, read N- to C-terminus: Extracellular metalloproteinase 4 (642 aa).

The signal sequence occupies residues 1–18 (MHGLLLAGLLALPLNVLA). The propeptide occupies 19-253 (HPTESHSSGI…VHSVVDYVSA (235 aa)). Positions 49–60 (SDSLTGQDGQSF) are enriched in polar residues. The interval 49–72 (SDSLTGQDGQSFTASSADADTSSG) is disordered. Low complexity predominate over residues 61 to 71 (TASSADADTSS). Asn-419 carries N-linked (GlcNAc...) asparagine glycosylation. Position 436 (His-436) interacts with Zn(2+). Glu-437 is an active-site residue. Zn(2+) is bound at residue His-440. Asn-509 and Asn-602 each carry an N-linked (GlcNAc...) asparagine glycan.

This sequence belongs to the peptidase M36 family. The cofactor is Zn(2+).

Its subcellular location is the secreted. Secreted metalloproteinase that allows assimilation of proteinaceous substrates and probably acts as a virulence factor. The protein is Extracellular metalloproteinase 4 (MEP4) of Arthroderma gypseum (strain ATCC MYA-4604 / CBS 118893) (Microsporum gypseum).